A 24-amino-acid chain; its full sequence is Ascaphin-6 (24 aa).

In terms of tissue distribution, expressed by the skin glands.

It localises to the secreted. Its function is as follows. Antimicrobial peptide that shows higher potency against Gram-negative bacteria than against Gram-positive bacteria. Has a very week hemolytic activity. The protein is Ascaphin-6 of Ascaphus truei (Coastal tailed frog).